The primary structure comprises 452 residues: 3-phosphoshikimate 1-carboxyvinyltransferase (452 aa).

Residues 1–23 form a disordered region; the sequence is MLNGSASKPATARKSAGLTGSVR. Residues Lys28, Ser29, and Arg33 each contribute to the 3-phosphoshikimate site. Lys28 contributes to the phosphoenolpyruvate binding site. Phosphoenolpyruvate-binding residues include Gly100 and Arg128. Positions 173, 175, 326, and 353 each coordinate 3-phosphoshikimate. Residue Gln175 coordinates phosphoenolpyruvate. Catalysis depends on Asp326, which acts as the Proton acceptor. 2 residues coordinate phosphoenolpyruvate: Arg357 and Arg405.

This sequence belongs to the EPSP synthase family. Monomer.

It is found in the cytoplasm. The catalysed reaction is 3-phosphoshikimate + phosphoenolpyruvate = 5-O-(1-carboxyvinyl)-3-phosphoshikimate + phosphate. Its pathway is metabolic intermediate biosynthesis; chorismate biosynthesis; chorismate from D-erythrose 4-phosphate and phosphoenolpyruvate: step 6/7. Functionally, catalyzes the transfer of the enolpyruvyl moiety of phosphoenolpyruvate (PEP) to the 5-hydroxyl of shikimate-3-phosphate (S3P) to produce enolpyruvyl shikimate-3-phosphate and inorganic phosphate. This is 3-phosphoshikimate 1-carboxyvinyltransferase from Rhizobium johnstonii (strain DSM 114642 / LMG 32736 / 3841) (Rhizobium leguminosarum bv. viciae).